A 393-amino-acid polypeptide reads, in one-letter code: Phosphoglycerate kinase (393 aa).

Substrate contacts are provided by residues 21 to 23 (DLN), R36, 59 to 62 (HLGR), R113, and R146. ATP contacts are provided by residues K197, E319, and 345–348 (GGDT).

The protein belongs to the phosphoglycerate kinase family. As to quaternary structure, monomer.

The protein localises to the cytoplasm. The catalysed reaction is (2R)-3-phosphoglycerate + ATP = (2R)-3-phospho-glyceroyl phosphate + ADP. It participates in carbohydrate degradation; glycolysis; pyruvate from D-glyceraldehyde 3-phosphate: step 2/5. The chain is Phosphoglycerate kinase from Nitratidesulfovibrio vulgaris (strain DP4) (Desulfovibrio vulgaris).